The sequence spans 402 residues: Propionate kinase (402 aa).

The ATP site is built by N11 and K18. Mg(2+) is bound at residue N11. A substrate-binding site is contributed by R86. D143 serves as the catalytic Proton donor/acceptor. ATP contacts are provided by residues H175, H203–G207, D278–R280, and G326–N330.

Belongs to the acetokinase family. TdcD subfamily. As to quaternary structure, homodimer. The cofactor is Mg(2+).

It catalyses the reaction propanoate + ATP = propanoyl phosphate + ADP. The protein operates within amino-acid degradation; L-threonine degradation via propanoate pathway; propanoate from L-threonine: step 4/4. Functionally, catalyzes the conversion of propionyl phosphate and ADP to propionate and ATP. The sequence is that of Propionate kinase from Citrobacter koseri (strain ATCC BAA-895 / CDC 4225-83 / SGSC4696).